The chain runs to 210 residues: N-(5'-phosphoribosyl)anthranilate isomerase (210 aa).

Belongs to the TrpF family.

It catalyses the reaction N-(5-phospho-beta-D-ribosyl)anthranilate = 1-(2-carboxyphenylamino)-1-deoxy-D-ribulose 5-phosphate. Its pathway is amino-acid biosynthesis; L-tryptophan biosynthesis; L-tryptophan from chorismate: step 3/5. This Pseudomonas fluorescens (strain SBW25) protein is N-(5'-phosphoribosyl)anthranilate isomerase.